The primary structure comprises 129 residues: Glycine cleavage system H protein (129 aa).

Residues 24–106 enclose the Lipoyl-binding domain; the sequence is TFTVGITEHA…FGDGWLFRIK (83 aa). The residue at position 65 (lysine 65) is an N6-lipoyllysine.

Belongs to the GcvH family. The glycine cleavage system is composed of four proteins: P, T, L and H. Requires (R)-lipoate as cofactor.

In terms of biological role, the glycine cleavage system catalyzes the degradation of glycine. The H protein shuttles the methylamine group of glycine from the P protein to the T protein. In Pseudoalteromonas translucida (strain TAC 125), this protein is Glycine cleavage system H protein.